Here is a 220-residue protein sequence, read N- to C-terminus: Claudin-24 (220 aa).

Residues 1–10 lie on the Cytoplasmic side of the membrane; it reads MALIFRTAMQ. A helical transmembrane segment spans residues 11 to 31; that stretch reads SVGLLLSLLGWILSIITTYLP. The Extracellular segment spans residues 32 to 81; the sequence is HWKNLNLDLNEMENWTMGLWQTCVIQEEVGMQCKDFDSFLALPAELRVSR. Residues 82–102 traverse the membrane as a helical segment; that stretch reads ILMFLSNGLGFLGLLVSGFGL. Residues 103-117 are Cytoplasmic-facing; it reads DCLRIGESQRDLKRR. The chain crosses the membrane as a helical span at residues 118–138; that stretch reads LLILGGILSWASGITALVPVS. Over 139–161 the chain is Extracellular; the sequence is WVAHKTVQEFWDENVPDFVPRWE. The chain crosses the membrane as a helical span at residues 162–182; sequence FGEALFLGWFAGLSLLLGGCL. Residues 183 to 220 are Cytoplasmic-facing; it reads LNCAACSSHAPLALGHYAVAQMQTQCPYLEDGTADPQV.

Belongs to the claudin family.

The protein localises to the cell junction. It is found in the tight junction. It localises to the cell membrane. Functionally, plays a major role in tight junction-specific obliteration of the intercellular space, through calcium-independent cell-adhesion activity. The chain is Claudin-24 from Homo sapiens (Human).